A 75-amino-acid chain; its full sequence is Protein RALF-like 9 (75 aa).

The signal sequence occupies residues 1–28; it reads MGMSKSIKVILSLALVVFLALAATKVEA. Cystine bridges form between C46–C54 and C66–C72.

It belongs to the plant rapid alkalinization factor (RALF) family.

The protein localises to the secreted. Its function is as follows. Cell signaling peptide that may regulate plant stress, growth, and development. Mediates a rapid alkalinization of extracellular space by mediating a transient increase in the cytoplasmic Ca(2+) concentration leading to a calcium-dependent signaling events through a cell surface receptor and a concomitant activation of some intracellular mitogen-activated protein kinases. This chain is Protein RALF-like 9 (RALFL9), found in Arabidopsis thaliana (Mouse-ear cress).